Consider the following 262-residue polypeptide: Indole-3-glycerol phosphate synthase (262 aa).

This sequence belongs to the TrpC family.

It carries out the reaction 1-(2-carboxyphenylamino)-1-deoxy-D-ribulose 5-phosphate + H(+) = (1S,2R)-1-C-(indol-3-yl)glycerol 3-phosphate + CO2 + H2O. It functions in the pathway amino-acid biosynthesis; L-tryptophan biosynthesis; L-tryptophan from chorismate: step 4/5. The polypeptide is Indole-3-glycerol phosphate synthase (Bordetella pertussis (strain Tohama I / ATCC BAA-589 / NCTC 13251)).